Consider the following 294-residue polypeptide: Cyclin-G1 (294 aa).

It belongs to the cyclin family. Cyclin G subfamily. In terms of assembly, binds to B' regulatory B subunits of protein phosphatase A (PP2A) following induction by p53 (in vitro). In terms of tissue distribution, highest levels in kidney, heart and skeletal muscle.

Its subcellular location is the nucleus. Its function is as follows. May play a role in growth regulation. Is associated with G2/M phase arrest in response to DNA damage. May be an intermediate by which p53 mediates its role as an inhibitor of cellular proliferation. The chain is Cyclin-G1 (Ccng1) from Mus musculus (Mouse).